Here is a 142-residue protein sequence, read N- to C-terminus: Probable transport accessory protein MmpS5 (142 aa).

Residues 7–26 (RAWIPLLILVVVAIAGFTVQ) form a helical membrane-spanning segment.

It belongs to the MmpS family.

The protein localises to the cell membrane. This is Probable transport accessory protein MmpS5 (mmpS5) from Mycobacterium bovis (strain ATCC BAA-935 / AF2122/97).